The sequence spans 111 residues: Cytochrome c oxidase subunit 6A1, mitochondrial (111 aa).

The N-terminal 26 residues, 1-26 (MASAVLSASRVSRPLGRALPGLRRPM), are a transit peptide targeting the mitochondrion. Over 27-36 (SSGAHGEEGS) the chain is Mitochondrial matrix. Residues 37–61 (ARMWKALTYFVALPGVGVSMLNVFL) form a helical membrane-spanning segment. The Mitochondrial intermembrane segment spans residues 62-111 (KSRHEEHERPPFVAYPHLRIRTKPFPWGDGNHTLFHNPHVNPLPTGYEDE).

It belongs to the cytochrome c oxidase subunit 6A family. As to quaternary structure, component of the cytochrome c oxidase (complex IV, CIV), a multisubunit enzyme composed of 14 subunits. The complex is composed of a catalytic core of 3 subunits MT-CO1, MT-CO2 and MT-CO3, encoded in the mitochondrial DNA, and 11 supernumerary subunits COX4I, COX5A, COX5B, COX6A, COX6B, COX6C, COX7A, COX7B, COX7C, COX8 and NDUFA4, which are encoded in the nuclear genome. The complex exists as a monomer or a dimer and forms supercomplexes (SCs) in the inner mitochondrial membrane with NADH-ubiquinone oxidoreductase (complex I, CI) and ubiquinol-cytochrome c oxidoreductase (cytochrome b-c1 complex, complex III, CIII), resulting in different assemblies (supercomplex SCI(1)III(2)IV(1) and megacomplex MCI(2)III(2)IV(2)).

It localises to the mitochondrion inner membrane. The protein operates within energy metabolism; oxidative phosphorylation. Component of the cytochrome c oxidase, the last enzyme in the mitochondrial electron transport chain which drives oxidative phosphorylation. The respiratory chain contains 3 multisubunit complexes succinate dehydrogenase (complex II, CII), ubiquinol-cytochrome c oxidoreductase (cytochrome b-c1 complex, complex III, CIII) and cytochrome c oxidase (complex IV, CIV), that cooperate to transfer electrons derived from NADH and succinate to molecular oxygen, creating an electrochemical gradient over the inner membrane that drives transmembrane transport and the ATP synthase. Cytochrome c oxidase is the component of the respiratory chain that catalyzes the reduction of oxygen to water. Electrons originating from reduced cytochrome c in the intermembrane space (IMS) are transferred via the dinuclear copper A center (CU(A)) of subunit 2 and heme A of subunit 1 to the active site in subunit 1, a binuclear center (BNC) formed by heme A3 and copper B (CU(B)). The BNC reduces molecular oxygen to 2 water molecules unsing 4 electrons from cytochrome c in the IMS and 4 protons from the mitochondrial matrix. The chain is Cytochrome c oxidase subunit 6A1, mitochondrial (Cox6a1) from Mus musculus (Mouse).